The sequence spans 462 residues: Nuclear distribution protein PAC1 (462 aa).

One can recognise a LisH domain in the interval 9 to 41; that stretch reads QAEELHKAIIAYLGVINAPKTAAAFREEVNFSA. A coiled-coil region spans residues 60–87; it reads TSVVRLQKKVLELEQRNQSLQSELDSTT. Residues 78 to 99 show a composition bias toward polar residues; the sequence is SLQSELDSTTPTSLLRRNQDPS. The tract at residues 78–103 is disordered; the sequence is SLQSELDSTTPTSLLRRNQDPSSWLP. WD repeat units lie at residues 113 to 154, 156 to 196, 200 to 247, 250 to 289, 292 to 352, 354 to 393, 398 to 445, and 447 to 462; these read SHRS…RTVK, HTKG…KNIR, GHDH…CVKT, GHAD…AKCT, GHEH…IKTL, GHDN…RCVK, AHSH…AGIR, and VIAT…IFAS. The disordered stretch occupies residues 414-434; it reads KDAPTNGDAPNGTTANGASKK.

The protein belongs to the WD repeat LIS1/nudF family. In terms of assembly, self-associates. Interacts with NDL1 and dynein.

It is found in the cytoplasm. Its subcellular location is the cytoskeleton. The protein localises to the spindle pole. In terms of biological role, positively regulates the activity of the minus-end directed microtubule motor protein dynein. May enhance dynein-mediated microtubule sliding by targeting dynein to the microtubule plus end. Required for nuclear migration during vegetative growth as well as development. Required for retrograde early endosome (EE) transport from the hyphal tip. Required for localization of dynein to the mitotic spindle poles. Recruits additional proteins to the dynein complex at SPBs. This chain is Nuclear distribution protein PAC1, found in Phaeosphaeria nodorum (strain SN15 / ATCC MYA-4574 / FGSC 10173) (Glume blotch fungus).